The sequence spans 462 residues: Argininosuccinate lyase (462 aa).

It belongs to the lyase 1 family. Argininosuccinate lyase subfamily.

Its subcellular location is the cytoplasm. The catalysed reaction is 2-(N(omega)-L-arginino)succinate = fumarate + L-arginine. The protein operates within amino-acid biosynthesis; L-arginine biosynthesis; L-arginine from L-ornithine and carbamoyl phosphate: step 3/3. The chain is Argininosuccinate lyase from Leuconostoc citreum (strain KM20).